The primary structure comprises 524 residues: Cytochrome P450 1A1 (524 aa).

The interval T33–P44 is mitochondrial targeting signal. S71 carries O-linked (GlcNAc) serine glycosylation. Residue F228 participates in substrate binding. Position 461 (C461) interacts with heme.

This sequence belongs to the cytochrome P450 family. Both Cytochrome P450MT2A and Cytochrome P450MT2B interact with cytosolic chaperones HSP70 and HSP90; this interaction is required for initial targeting to mitochondria. P450MT2B interacts (via mitochondrial targeting signal) with TOMM40 (via N-terminus); this interaction is required for translocation across the mitochondrial outer membrane. It depends on heme as a cofactor. In terms of processing, two forms; MT2A (long form) and MT2B (short form); are produced by NH2-terminal proteolytic cleavage. This cleavage activates a cryptic mitochondrial targeting signal. As to expression, liver.

The protein resides in the cytoplasm. It is found in the endoplasmic reticulum membrane. The protein localises to the mitochondrion inner membrane. It localises to the microsome membrane. It carries out the reaction an organic molecule + reduced [NADPH--hemoprotein reductase] + O2 = an alcohol + oxidized [NADPH--hemoprotein reductase] + H2O + H(+). The catalysed reaction is estrone + reduced [NADPH--hemoprotein reductase] + O2 = 2-hydroxyestrone + oxidized [NADPH--hemoprotein reductase] + H2O + H(+). The enzyme catalyses estrone + reduced [NADPH--hemoprotein reductase] + O2 = 4-hydroxyestrone + oxidized [NADPH--hemoprotein reductase] + H2O + H(+). It catalyses the reaction estrone + reduced [NADPH--hemoprotein reductase] + O2 = 6alpha-hydroxyestrone + oxidized [NADPH--hemoprotein reductase] + H2O + H(+). It carries out the reaction estrone + reduced [NADPH--hemoprotein reductase] + O2 = 15alpha-hydroxyestrone + oxidized [NADPH--hemoprotein reductase] + H2O + H(+). The catalysed reaction is estrone + reduced [NADPH--hemoprotein reductase] + O2 = 16alpha-hydroxyestrone + oxidized [NADPH--hemoprotein reductase] + H2O + H(+). The enzyme catalyses 17beta-estradiol + reduced [NADPH--hemoprotein reductase] + O2 = 2-hydroxy-17beta-estradiol + oxidized [NADPH--hemoprotein reductase] + H2O + H(+). It catalyses the reaction 17beta-estradiol + reduced [NADPH--hemoprotein reductase] + O2 = 4-hydroxy-17beta-estradiol + oxidized [NADPH--hemoprotein reductase] + H2O + H(+). It carries out the reaction 17beta-estradiol + reduced [NADPH--hemoprotein reductase] + O2 = 6alpha-hydroxy-17beta-estradiol + oxidized [NADPH--hemoprotein reductase] + H2O + H(+). The catalysed reaction is 17beta-estradiol + reduced [NADPH--hemoprotein reductase] + O2 = 7alpha-hydroxy-17beta-estradiol + oxidized [NADPH--hemoprotein reductase] + H2O + H(+). The enzyme catalyses 17beta-estradiol + reduced [NADPH--hemoprotein reductase] + O2 = 15alpha-hydroxy-17beta-estradiol + oxidized [NADPH--hemoprotein reductase] + H2O + H(+). It catalyses the reaction (5Z,8Z,11Z)-eicosatrienoate + reduced [NADPH--hemoprotein reductase] + O2 = 19-hydroxy-(5Z,8Z,11Z)-eicosatrienoate + oxidized [NADPH--hemoprotein reductase] + H2O + H(+). It carries out the reaction (5Z,8Z,11Z,14Z)-eicosatetraenoate + reduced [NADPH--hemoprotein reductase] + O2 = 16-hydroxy-(5Z,8Z,11Z,14Z)-eicosatetraenoate + oxidized [NADPH--hemoprotein reductase] + H2O + H(+). The catalysed reaction is (5Z,8Z,11Z,14Z)-eicosatetraenoate + reduced [NADPH--hemoprotein reductase] + O2 = 17-hydroxy-(5Z,8Z,11Z,14Z)-eicosatetraenoate + oxidized [NADPH--hemoprotein reductase] + H2O + H(+). The enzyme catalyses (5Z,8Z,11Z,14Z)-eicosatetraenoate + reduced [NADPH--hemoprotein reductase] + O2 = 18-hydroxy-(5Z,8Z,11Z,14Z)-eicosatetraenoate + oxidized [NADPH--hemoprotein reductase] + H2O + H(+). It catalyses the reaction (5Z,8Z,11Z,14Z)-eicosatetraenoate + reduced [NADPH--hemoprotein reductase] + O2 = 19-hydroxy-(5Z,8Z,11Z,14Z)-eicosatetraenoate + oxidized [NADPH--hemoprotein reductase] + H2O + H(+). It carries out the reaction (5Z,8Z,11Z,14Z,17Z)-eicosapentaenoate + reduced [NADPH--hemoprotein reductase] + O2 = 19-hydroxy-(5Z,8Z,11Z,14Z,17Z)-eicosapentaenoate + oxidized [NADPH--hemoprotein reductase] + H2O + H(+). The catalysed reaction is (5Z,8Z,11Z,14Z)-eicosatetraenoate + reduced [NADPH--hemoprotein reductase] + O2 = (8R,9S)-epoxy-(5Z,11Z,14Z)-eicosatrienoate + oxidized [NADPH--hemoprotein reductase] + H2O + H(+). The enzyme catalyses (5Z,8Z,11Z,14Z)-eicosatetraenoate + reduced [NADPH--hemoprotein reductase] + O2 = (11R,12S)-epoxy-(5Z,8Z,14Z)-eicosatrienoate + oxidized [NADPH--hemoprotein reductase] + H2O + H(+). It catalyses the reaction (5Z,8Z,11Z,14Z)-eicosatetraenoate + reduced [NADPH--hemoprotein reductase] + O2 = (11S,12R)-epoxy-(5Z,8Z,14Z)-eicosatrienoate + oxidized [NADPH--hemoprotein reductase] + H2O + H(+). It carries out the reaction (5Z,8Z,11Z,14Z)-eicosatetraenoate + reduced [NADPH--hemoprotein reductase] + O2 = (14R,15S)-epoxy-(5Z,8Z,11Z)-eicosatrienoate + oxidized [NADPH--hemoprotein reductase] + H2O + H(+). The catalysed reaction is (5Z,8Z,11Z,14Z,17Z)-eicosapentaenoate + reduced [NADPH--hemoprotein reductase] + O2 = (17R,18S)-epoxy-(5Z,8Z,11Z,14Z)-eicosatetraenoate + oxidized [NADPH--hemoprotein reductase] + H2O + H(+). The enzyme catalyses (4Z,7Z,10Z,13Z,16Z,19Z)-docosahexaenoate + reduced [NADPH--hemoprotein reductase] + O2 = (19S,20R)-epoxy-(4Z,7Z,10Z,13Z,16Z)-docosapentaenoate + oxidized [NADPH--hemoprotein reductase] + H2O + H(+). It catalyses the reaction (4Z,7Z,10Z,13Z,16Z,19Z)-docosahexaenoate + reduced [NADPH--hemoprotein reductase] + O2 = (19R,20S)-epoxy-(4Z,7Z,10Z,13Z,16Z)-docosapentaenoate + oxidized [NADPH--hemoprotein reductase] + H2O + H(+). It carries out the reaction all-trans-retinol + reduced [NADPH--hemoprotein reductase] + O2 = all-trans-retinal + oxidized [NADPH--hemoprotein reductase] + 2 H2O + H(+). The catalysed reaction is all-trans-retinal + reduced [NADPH--hemoprotein reductase] + O2 = all-trans-retinoate + oxidized [NADPH--hemoprotein reductase] + H2O + 2 H(+). The enzyme catalyses (13S)-hydroperoxy-(9Z,11E)-octadecadienoate = 13-oxo-(9Z,11E)-octadecadienoate + H2O. It catalyses the reaction (12S)-hydroperoxy-(5Z,8Z,10E,14Z)-eicosatetraenoate = 12-oxo-(5Z,8Z,10E,14Z)-eicosatetraenoate + H2O. It carries out the reaction (15S)-hydroperoxy-(5Z,8Z,11Z,13E)-eicosatetraenoate = 15-oxo-(5Z,8Z,11Z,13E)-eicosatetraenoate + H2O. The catalysed reaction is (5S)-hydroperoxy-(6E,8Z,11Z,14Z)-eicosatetraenoate = 5-oxo-(6E,8Z,11Z,14Z)-eicosatetraenoate + H2O. Its pathway is steroid hormone biosynthesis. It participates in lipid metabolism; fatty acid metabolism. The protein operates within cofactor metabolism; retinol metabolism. In terms of biological role, a cytochrome P450 monooxygenase involved in the metabolism of various endogenous substrates, including fatty acids, steroid hormones and vitamins. Mechanistically, uses molecular oxygen inserting one oxygen atom into a substrate, and reducing the second into a water molecule, with two electrons provided by NADPH via cytochrome P450 reductase (CPR; NADPH-ferrihemoprotein reductase). Catalyzes the hydroxylation of carbon-hydrogen bonds. Exhibits high catalytic activity for the formation of hydroxyestrogens from estrone (E1) and 17beta-estradiol (E2), namely 2-hydroxy E1 and E2, as well as D-ring hydroxylated E1 and E2 at the C15alpha and C16alpha positions. Displays different regioselectivities for polyunsaturated fatty acids (PUFA) hydroxylation. Catalyzes the epoxidation of double bonds of certain PUFA. Converts arachidonic acid toward epoxyeicosatrienoic acid (EET) regioisomers, 8,9-, 11,12-, and 14,15-EET, that function as lipid mediators in the vascular system. Displays an absolute stereoselectivity in the epoxidation of eicosapentaenoic acid (EPA) producing the 17(R),18(S) enantiomer. May play an important role in all-trans retinoic acid biosynthesis in extrahepatic tissues. Catalyzes two successive oxidative transformation of all-trans retinol to all-trans retinal and then to the active form all-trans retinoic acid. May also participate in eicosanoids metabolism by converting hydroperoxide species into oxo metabolites (lipoxygenase-like reaction, NADPH-independent). This is Cytochrome P450 1A1 from Rattus norvegicus (Rat).